A 246-amino-acid chain; its full sequence is Pyridoxine 5'-phosphate synthase (246 aa).

Asn-12 is a 3-amino-2-oxopropyl phosphate binding site. 14 to 15 (DH) is a binding site for 1-deoxy-D-xylulose 5-phosphate. Arg-23 contacts 3-amino-2-oxopropyl phosphate. His-48 acts as the Proton acceptor in catalysis. Residues Arg-50 and His-55 each contribute to the 1-deoxy-D-xylulose 5-phosphate site. Catalysis depends on Glu-75, which acts as the Proton acceptor. 1-deoxy-D-xylulose 5-phosphate is bound at residue Thr-105. His-196 functions as the Proton donor in the catalytic mechanism. Residues Gly-197 and 218–219 (GH) contribute to the 3-amino-2-oxopropyl phosphate site.

This sequence belongs to the PNP synthase family. In terms of assembly, homooctamer; tetramer of dimers.

It localises to the cytoplasm. The enzyme catalyses 3-amino-2-oxopropyl phosphate + 1-deoxy-D-xylulose 5-phosphate = pyridoxine 5'-phosphate + phosphate + 2 H2O + H(+). It participates in cofactor biosynthesis; pyridoxine 5'-phosphate biosynthesis; pyridoxine 5'-phosphate from D-erythrose 4-phosphate: step 5/5. Its function is as follows. Catalyzes the complicated ring closure reaction between the two acyclic compounds 1-deoxy-D-xylulose-5-phosphate (DXP) and 3-amino-2-oxopropyl phosphate (1-amino-acetone-3-phosphate or AAP) to form pyridoxine 5'-phosphate (PNP) and inorganic phosphate. This Pseudomonas savastanoi pv. phaseolicola (strain 1448A / Race 6) (Pseudomonas syringae pv. phaseolicola (strain 1448A / Race 6)) protein is Pyridoxine 5'-phosphate synthase.